A 208-amino-acid polypeptide reads, in one-letter code: Proheparin-binding EGF-like growth factor (208 aa).

The signal sequence occupies residues 1–19 (MKLLPSVVLKLLLAAVLSA). Residues 20–62 (LVTGESLEQLRRGLAAGTSNPDPSTGSTDQLLRLGGGRDRKVR) constitute a propeptide that is removed on maturation. Residues 20-160 (LVTGESLEQL…ENRLYTYDHT (141 aa)) lie on the Extracellular side of the membrane. A disordered region spans residues 34-55 (AAGTSNPDPSTGSTDQLLRLGG). The span at 36–49 (GTSNPDPSTGSTDQ) shows a compositional bias: polar residues. T75 and T85 each carry an O-linked (GalNAc...) threonine glycan. The tract at residues 81–104 (QALATPSKEEHGKRKKKGKGLGKK) is disordered. Residues 93-102 (KRKKKGKGLG) are compositionally biased toward basic residues. In terms of domain architecture, EGF-like spans 104–144 (KRDPCLRKYKDFCIHGECKYVKELRAPSCICHPGYHGERCH). Cystine bridges form between C108–C121, C116–C132, and C134–C143. The tract at residues 136 to 148 (PGYHGERCHGLSL) is toxin-binding domain. The propeptide at 149-208 (PVENRLYTYDHTTILAVVAVVLSSVCLLVIVGLLMFRYHRRGGYDVENEEKVKLGMTNSH) is C-terminal. The helical transmembrane segment at 161 to 184 (TILAVVAVVLSSVCLLVIVGLLMF) threads the bilayer. The Cytoplasmic portion of the chain corresponds to 185–208 (RYHRRGGYDVENEEKVKLGMTNSH).

Interacts with EGFR and ERBB4. Interacts with FBLN1. In terms of processing, O-glycosylated.

The protein resides in the secreted. Its subcellular location is the extracellular space. It localises to the cell membrane. Functionally, growth factor that mediates its effects via EGFR, ERBB2 and ERBB4. Required for normal cardiac valve formation and normal heart function. Promotes smooth muscle cell proliferation. May be involved in macrophage-mediated cellular proliferation. It is mitogenic for fibroblasts, but not endothelial cells. It is able to bind EGF receptor/EGFR with higher affinity than EGF itself and is a far more potent mitogen for smooth muscle cells than EGF. Also acts as a diphtheria toxin receptor. The chain is Proheparin-binding EGF-like growth factor (HBEGF) from Chlorocebus aethiops (Green monkey).